Consider the following 642-residue polypeptide: Triacylglycerol lipase 3 (642 aa).

The 189-residue stretch at 204-392 folds into the PNPLA domain; the sequence is LILQGGSLFG…NEIEPFLNIN (189 aa). The GXSXG signature appears at 235–239; sequence GSSMG. S237 functions as the Nucleophile in the catalytic mechanism. Positions 298-303 match the HXXXXD acyltransferase motif motif; the sequence is HGYSQD. The active-site Proton acceptor is E403. A compositionally biased stretch (polar residues) spans 471 to 481; it reads RKTQRSSSQSP. The disordered stretch occupies residues 471 to 502; the sequence is RKTQRSSSQSPIKAGTVEDLEPEPLMSPVPPS.

The protein resides in the lipid droplet. It catalyses the reaction a triacylglycerol + H2O = a diacylglycerol + a fatty acid + H(+). The catalysed reaction is 1,2,3-tri-(9Z-octadecenoyl)-glycerol + H2O = di-(9Z)-octadecenoylglycerol + (9Z)-octadecenoate + H(+). It carries out the reaction di-(9Z)-octadecenoylglycerol + H2O = (9Z-octadecenoyl)-glycerol + (9Z)-octadecenoate + H(+). The enzyme catalyses a 1-acyl-sn-glycero-3-phosphoethanolamine + (9Z)-octadecenoyl-CoA = 1-acyl-2-(9Z)-octadecenoyl-sn-glycero-3-phosphoethanolamine + CoA. It catalyses the reaction a 1-acyl-sn-glycero-3-phosphoethanolamine + hexadecanoyl-CoA = 1-acyl-2-hexadecanoyl-sn-glycero-3-phosphoethanolamine + CoA. Loses its lipolytic activity in cells lacking nonpolar lipids. Lipid particle-localized triacylglycerol (TAG) lipase. The lipid droplet/particle is a lipid storage compartment which serves as a depot of energy and building blocks for membrane lipid biosynthesis. Involved in the mobilization of the non-polar storage lipids triacylglycerols (TAGs) from lipid particles by hydrolysis of TAGs, releasing and supplying specific fatty acids to the appropriate metabolic pathways. Also catalyzes the acylation of lysophosphatidic acid (LPA). Important for efficient sporulation, but rather through its acyltransferase than lipase activity. This is Triacylglycerol lipase 3 (TGL3) from Saccharomyces cerevisiae (strain ATCC 204508 / S288c) (Baker's yeast).